Reading from the N-terminus, the 418-residue chain is MDRLRIVGGRRLEGAVTISGAKNAALPQIAAALLSPYPLELTNLPDVTDVENMLGVVRLHGAEVTRSAHAATIDTSAAVSKETSYDTVRKMRATVLVLAPLLARFGHARVSLPGGCAIGARPVDMHVAALAALGAKIAIENGLIVASAPNGLTGTRIVLSSPSVGATETAMMAATTAKGETEILNAAREPEVADLAACLNAMGARIEGAGTHRILIAGDTGWHAARHDIIPDRIEAGTYAIAAAITGGQLELTHARLEHMASVVQLLEATGVSVWPGDRGLIVSRERPLKAADLTTEPYPGFPTDLQAQFMALMCCAEGASLLRETIFENRFMHVPELMRLGANIKLQGTMALVRGGEKLHGAQVMATDLRASVSLVLAALVSEGETIINRVYHLDRGYEQLDRKLRLCGADIERLSA.

Phosphoenolpyruvate is bound at residue 22–23 (KN). UDP-N-acetyl-alpha-D-glucosamine is bound at residue R92. Catalysis depends on C116, which acts as the Proton donor. The residue at position 116 (C116) is a 2-(S-cysteinyl)pyruvic acid O-phosphothioketal. 2 residues coordinate UDP-N-acetyl-alpha-D-glucosamine: D305 and I327.

Belongs to the EPSP synthase family. MurA subfamily.

The protein localises to the cytoplasm. It carries out the reaction phosphoenolpyruvate + UDP-N-acetyl-alpha-D-glucosamine = UDP-N-acetyl-3-O-(1-carboxyvinyl)-alpha-D-glucosamine + phosphate. Its pathway is cell wall biogenesis; peptidoglycan biosynthesis. Its function is as follows. Cell wall formation. Adds enolpyruvyl to UDP-N-acetylglucosamine. The sequence is that of UDP-N-acetylglucosamine 1-carboxyvinyltransferase 2 from Mesorhizobium japonicum (strain LMG 29417 / CECT 9101 / MAFF 303099) (Mesorhizobium loti (strain MAFF 303099)).